Consider the following 805-residue polypeptide: U-box domain-containing protein 70 (805 aa).

TPR repeat units lie at residues 15 to 48, 49 to 82, 90 to 127, 129 to 153, 154 to 187, 189 to 221, and 222 to 255; these read ARREKEAGNAAYRKLYLETAVRHYTRGALLDPRD, ISFLTNRAAAYLLMSKYKECVRDCDEAVEKGREL, ARALARKASALLKLAACAADYDPAIRALQQSLAEHYSE, TLAKLGEAEEARKEIEERERLDQEA, ADHHRDRGNDFFKQKRYQEAAMHYTEAMKKNPKD, RVFSNRAQCHIYLGALPEGLEDADKCIALDPTF, and LKGYLRKAKVQLLMGNYEIALATYVEGLKCDPNN. The disordered stretch occupies residues 136 to 160; that stretch reads AEEARKEIEERERLDQEAADHHRDR. A coiled-coil region spans residues 341–417; that stretch reads RKETEESLSR…VREVEELRQK (77 aa). A Protein kinase domain is found at 445 to 711; the sequence is FSNSLKIGEG…GEVWAIVEAI (267 aa). ATP is bound by residues 451–459 and lysine 472; that span reads IGEGGFGCV. The active-site Proton acceptor is the aspartate 567. A U-box domain is found at 730–804; it reads SPPSYFICPI…QEWLQQHSMS (75 aa).

The protein belongs to the protein kinase superfamily. Ser/Thr protein kinase family. In terms of assembly, interacts with MODD.

The enzyme catalyses L-seryl-[protein] + ATP = O-phospho-L-seryl-[protein] + ADP + H(+). It carries out the reaction L-threonyl-[protein] + ATP = O-phospho-L-threonyl-[protein] + ADP + H(+). It catalyses the reaction S-ubiquitinyl-[E2 ubiquitin-conjugating enzyme]-L-cysteine + [acceptor protein]-L-lysine = [E2 ubiquitin-conjugating enzyme]-L-cysteine + N(6)-ubiquitinyl-[acceptor protein]-L-lysine.. It functions in the pathway protein modification; protein ubiquitination. In terms of biological role, functions as an E3 ubiquitin ligase. Is recruited by MODD to promote ubiquitination of BZIP46, a positive regulator of abscisic acid (ABA) signaling and drought stress tolerance. The protein is U-box domain-containing protein 70 of Oryza sativa subsp. japonica (Rice).